The sequence spans 179 residues: Peptidyl-tRNA hydrolase (179 aa).

Tyr15 is a binding site for tRNA. His20 acts as the Proton acceptor in catalysis. TRNA-binding residues include Tyr66, Asn68, and Asn114.

Belongs to the PTH family. In terms of assembly, monomer.

It is found in the cytoplasm. The enzyme catalyses an N-acyl-L-alpha-aminoacyl-tRNA + H2O = an N-acyl-L-amino acid + a tRNA + H(+). In terms of biological role, hydrolyzes ribosome-free peptidyl-tRNAs (with 1 or more amino acids incorporated), which drop off the ribosome during protein synthesis, or as a result of ribosome stalling. Its function is as follows. Catalyzes the release of premature peptidyl moieties from peptidyl-tRNA molecules trapped in stalled 50S ribosomal subunits, and thus maintains levels of free tRNAs and 50S ribosomes. The protein is Peptidyl-tRNA hydrolase of Chlamydia trachomatis serovar L2b (strain UCH-1/proctitis).